The following is a 130-amino-acid chain: Small ribosomal subunit protein uS9 (130 aa).

This sequence belongs to the universal ribosomal protein uS9 family.

This is Small ribosomal subunit protein uS9 from Albidiferax ferrireducens (strain ATCC BAA-621 / DSM 15236 / T118) (Rhodoferax ferrireducens).